A 494-amino-acid chain; its full sequence is Sulfate adenylyltransferase subunit 1 (494 aa).

Residues 24 to 240 (TRPLRLITCG…LELATVRSAQ (217 aa)) enclose the tr-type G domain. The segment at 33–40 (GSVDDGKS) is G1. GTP is bound at residue 33–40 (GSVDDGKS). Residues 91-95 (GITID) form a G2 region. Residues 112-115 (DTPG) are G3. GTP-binding positions include 112–116 (DTPGH) and 167–170 (NKID). The tract at residues 167–170 (NKID) is G4. The segment at 204–206 (SAL) is G5.

It belongs to the TRAFAC class translation factor GTPase superfamily. Classic translation factor GTPase family. CysN/NodQ subfamily. As to quaternary structure, heterodimer composed of CysD, the smaller subunit, and CysN.

It carries out the reaction sulfate + ATP + H(+) = adenosine 5'-phosphosulfate + diphosphate. The protein operates within sulfur metabolism; hydrogen sulfide biosynthesis; sulfite from sulfate: step 1/3. Its function is as follows. With CysD forms the ATP sulfurylase (ATPS) that catalyzes the adenylation of sulfate producing adenosine 5'-phosphosulfate (APS) and diphosphate, the first enzymatic step in sulfur assimilation pathway. APS synthesis involves the formation of a high-energy phosphoric-sulfuric acid anhydride bond driven by GTP hydrolysis by CysN coupled to ATP hydrolysis by CysD. The chain is Sulfate adenylyltransferase subunit 1 from Rhizobium rhizogenes (strain K84 / ATCC BAA-868) (Agrobacterium radiobacter).